The primary structure comprises 420 residues: 2',3'-cyclic-nucleotide 3'-phosphodiesterase (420 aa).

S9 carries the phosphoserine modification. Y110 is subject to Phosphotyrosine. Phosphoserine is present on residues S169, S227, and S239. The Proton acceptor role is filled by H250. T252 is a substrate binding site. Phosphothreonine is present on T262. The active-site Proton donor is H329. T331 contributes to the substrate binding site. S358 carries the phosphoserine modification. Position 417 is a cysteine methyl ester (C417). C417 carries S-farnesyl cysteine lipidation. Residues 418-420 constitute a propeptide, removed in mature form; the sequence is TII.

It belongs to the 2H phosphoesterase superfamily. CNPase family. Exists as monomers and homodimers.

It localises to the membrane. The protein localises to the melanosome. It carries out the reaction a nucleoside 2',3'-cyclic phosphate + H2O = a nucleoside 2'-phosphate + H(+). Functionally, catalyzes the formation of 2'-nucleotide products from 2',3'-cyclic substrates. May participate in RNA metabolism in the myelinating cell, CNP is the third most abundant protein in central nervous system myelin. In Rattus norvegicus (Rat), this protein is 2',3'-cyclic-nucleotide 3'-phosphodiesterase.